A 546-amino-acid chain; its full sequence is CTP synthase (546 aa).

Positions 1-267 are amidoligase domain; the sequence is MSKFVFVTGG…AQQTLELLNL (267 aa). S13 is a CTP binding site. S13 contributes to the UTP binding site. ATP contacts are provided by residues 14–19 and D71; that span reads SIGKGI. D71 and E141 together coordinate Mg(2+). CTP is bound by residues 148–150, 188–193, and K224; these read DIE and KTKPTQ. Residues 188–193 and K224 contribute to the UTP site; that span reads KTKPTQ. The Glutamine amidotransferase type-1 domain maps to 292–534; the sequence is EIAIVGKYVQ…MKAALKGREE (243 aa). G354 provides a ligand contact to L-glutamine. C381 (nucleophile; for glutamine hydrolysis) is an active-site residue. Residues 382–385, E405, and R462 contribute to the L-glutamine site; that span reads LGMQ. Catalysis depends on residues H507 and E509.

It belongs to the CTP synthase family. As to quaternary structure, homotetramer.

It carries out the reaction UTP + L-glutamine + ATP + H2O = CTP + L-glutamate + ADP + phosphate + 2 H(+). The enzyme catalyses L-glutamine + H2O = L-glutamate + NH4(+). It catalyses the reaction UTP + NH4(+) + ATP = CTP + ADP + phosphate + 2 H(+). Its pathway is pyrimidine metabolism; CTP biosynthesis via de novo pathway; CTP from UDP: step 2/2. Its activity is regulated as follows. Allosterically activated by GTP, when glutamine is the substrate; GTP has no effect on the reaction when ammonia is the substrate. The allosteric effector GTP functions by stabilizing the protein conformation that binds the tetrahedral intermediate(s) formed during glutamine hydrolysis. Inhibited by the product CTP, via allosteric rather than competitive inhibition. Catalyzes the ATP-dependent amination of UTP to CTP with either L-glutamine or ammonia as the source of nitrogen. Regulates intracellular CTP levels through interactions with the four ribonucleotide triphosphates. The polypeptide is CTP synthase (Microcystis aeruginosa (strain NIES-843 / IAM M-2473)).